The chain runs to 110 residues: Protein ripply3 (110 aa).

Positions 18 to 21 match the WRPW motif motif; sequence WRPW. The segment at 50 to 85 is ripply homology domain; that stretch reads HPVRLFLPRSRMQEYLSRLGSSVLASFPVQATLHFY. A compositionally biased stretch (acidic residues) spans 87-99; it reads DEDSSSEEEEDEE. Residues 87–110 are disordered; the sequence is DEDSSSEEEEDEEHANTRCRLWRP.

It belongs to the ripply family.

The protein localises to the nucleus. In terms of biological role, probable transcriptional regulator involved in developmental processes. The sequence is that of Protein ripply3 (ripply3) from Danio rerio (Zebrafish).